Here is a 366-residue protein sequence, read N- to C-terminus: Ribosomal RNA large subunit methyltransferase M (366 aa).

S-adenosyl-L-methionine is bound by residues serine 188, 221-224, aspartate 240, aspartate 260, and aspartate 277; that span reads CPGG. Lysine 306 acts as the Proton acceptor in catalysis.

It belongs to the class I-like SAM-binding methyltransferase superfamily. RNA methyltransferase RlmE family. RlmM subfamily. In terms of assembly, monomer.

Its subcellular location is the cytoplasm. The enzyme catalyses cytidine(2498) in 23S rRNA + S-adenosyl-L-methionine = 2'-O-methylcytidine(2498) in 23S rRNA + S-adenosyl-L-homocysteine + H(+). In terms of biological role, catalyzes the 2'-O-methylation at nucleotide C2498 in 23S rRNA. In Shigella flexneri serotype 5b (strain 8401), this protein is Ribosomal RNA large subunit methyltransferase M.